The following is a 406-amino-acid chain: Homocitrate synthase AksA (406 aa).

The region spanning 32–285 (IYIYDTTLRD…DLGLNLEVLP (254 aa)) is the Pyruvate carboxyltransferase domain.

The protein belongs to the alpha-IPM synthase/homocitrate synthase family.

It carries out the reaction acetyl-CoA + 2-oxoglutarate + H2O = (2R)-homocitrate + CoA + H(+). The catalysed reaction is 2-oxoadipate + acetyl-CoA + H2O = (R)-dihomocitrate + CoA + H(+). The enzyme catalyses 2-oxoheptanedioate + acetyl-CoA + H2O = (R)-trihomocitrate + CoA + H(+). It participates in organic acid metabolism; 2-oxosuberate biosynthesis. In terms of biological role, catalyzes the condensation of alpha-ketoglutarate and acetyl-CoA to form (R)-homocitrate. Can also catalyze the condensation of alpha-ketoadipate with acetyl-CoA to form (R)-homo(2)citrate, and the condensation of alpha-ketopimelate with acetyl-CoA to form (R)-homo(3)citrate. These reactions are part of the biosynthesis pathway of coenzyme B and biotin. The chain is Homocitrate synthase AksA (aksA) from Methanocaldococcus jannaschii (strain ATCC 43067 / DSM 2661 / JAL-1 / JCM 10045 / NBRC 100440) (Methanococcus jannaschii).